The chain runs to 185 residues: MLEDPMKQNVLQPLDKAEFRNVVGHFASGVTIVTAAHDGVPYGATISAVTSLCDTPPMVLVCLNQKLGTHAAIRKARHFTINILGEDQASLAHTFATPGADKFADVAVHHRQHGPRLAEALAYLTCRVVDDLEGGTHRIFVAEVVEAQAGTGNPLSYYRGRFGHFVPYRNAMWRTTQADNAVSPH.

Belongs to the non-flavoprotein flavin reductase family. The 4-NP/4-NCA monooxygenase is composed of an oxygenase component NpcA and a reductase component NpcB.

It catalyses the reaction 4-nitrophenol + NADH + O2 + H(+) = 4-nitrocatechol + NAD(+) + H2O. The enzyme catalyses 4-nitrocatechol + NADPH + O2 = 2-hydroxy-1,4-benzoquinone + nitrite + NADP(+) + H2O. It carries out the reaction 4-nitrocatechol + NADH + O2 = 2-hydroxy-1,4-benzoquinone + nitrite + NAD(+) + H2O. The protein operates within aromatic compound metabolism. It functions in the pathway xenobiotic degradation. Its activity is regulated as follows. Inhibited by methimazole. Functionally, involved in the degradation of para-nitrophenol (4-NP). Catalyzes both the initial hydroxylation of 4-NP to produce 4-nitrocatechol (4-NCA) and the subsequent oxidative release of the nitro group from 4-NCA to produce 2-hydroxy-1,4-benzoquinone. It can also use 4-nitroresorcinol as substrate with a rate of nitrite release similar to that observed with the two physiological substrates, 4-PN and 4-NCA. The chain is 4-nitrophenol 4-monooxygenase/4-nitrocatechol 2-monooxygenase, reductase component (npcB) from Rhodococcus opacus (Nocardia opaca).